The primary structure comprises 761 residues: MLSDFKQQQQQKHHSHNPPNSHDDTQTKLQVAKLTQVIQKFFTKAAQIILESRAYPETSTPSLYPTKEESSKINKWFNLYMTNIPDSCKDDLKLWKGVDLTTIPPMIIETYIDLRSLPADQTLVLMDDEKHPWTVAKSRGKKQEVVLERWLIEFEPNTTDATVMVEELPLSYKQAIVLFRSIYGFTRLMPAFKVKKNLQNKLPLGNKILDGNQPISSKGRIGLSKPIINTRTNESHMTQKYFQPVHTSLGTLKISVAYRMDSEFCLHENEELLSSHFHKRDEEETKKKVSSSVSPLSSGTSLKETSTSPRKSQPPIRIQPFKVGSMSTSPPVQSPSISQPGTAPIQNQPSVPSSSLERRVSITSNKSTSNASLAAFLRNARSSTPSANNIPIINANPISGTSVPRSFSSSTGHEDSIFVNPDSASNTPRFASSFGSRASRRYSSTSIRQQTPQSDLMGQTNSVDAALSGIDADDDISDFVRMIDSKSDLRLGGGGGGGNSSVHNMSINESSYHGDALNKFQSLRSQYQQLSDSVSASLILQSRHSSRKSSLNSPAGSFDSHHHQHQQQQQQQQNQQQSQSPHTNTTSSIHSHAHSYSHSRMKDARPRSEDHQQTKFSAARRSSNISPTTAVPSSIGTPSSISSRIPHVTTIISSSDVSSTGGNRTKSAATTAIVSGMATSPSIYDYRSPRYQNVFDDDDEDDNDEEEGDREGNQLHEGRNSTESSQNQSKRIMKHIKKDEEDSEDDEDLLFTMSDMNSRNF.

Composition is skewed to low complexity over residues 1–10 (MLSDFKQQQQ), 290–303 (SSSVSPLSSGTSLK), and 327–340 (STSPPVQSPSISQP). Disordered regions lie at residues 1–25 (MLSDFKQQQQQKHHSHNPPNSHDDT), 277–367 (FHKR…SNKS), 398–456 (ISGT…QSDL), 488–507 (DLRLGGGGGGGNSSVHNMSI), 544–642 (HSSR…SSIS), and 691–761 (YQNV…SRNF). 2 stretches are compositionally biased toward polar residues: residues 344-367 (PIQNQPSVPSSSLERRVSITSNKS) and 400-411 (GTSVPRSFSSST). A compositionally biased stretch (low complexity) spans 429–444 (RFASSFGSRASRRYSS). A compositionally biased stretch (polar residues) spans 445–456 (TSIRQQTPQSDL). A compositionally biased stretch (low complexity) spans 566 to 590 (QQQQQQQQNQQQSQSPHTNTTSSIH). A compositionally biased stretch (basic and acidic residues) spans 600-613 (RMKDARPRSEDHQQ). Polar residues predominate over residues 614-631 (TKFSAARRSSNISPTTAV). The span at 632–642 (PSSIGTPSSIS) shows a compositional bias: low complexity. Over residues 695 to 709 (FDDDDEDDNDEEEGD) the composition is skewed to acidic residues. A compositionally biased stretch (basic and acidic residues) spans 710–720 (REGNQLHEGRN). The segment covering 721-730 (STESSQNQSK) has biased composition (polar residues).

It belongs to the ATG13 family. Fungi subfamily. In terms of assembly, interacts with ATG1 to form the ATG1-ATG13 kinase complex.

It is found in the cytoplasm. Its subcellular location is the preautophagosomal structure. Functionally, plays a key role in autophagy. Activates the atg1 kinase in a nutritional condition dependent manner through the TOR pathway, leading to autophagy. Also involved in cytoplasm to vacuole transport (Cvt) and more specifically in Cvt vesicle formation. Seems to play a role in the switching machinery regulating the conversion between the Cvt pathway and autophagy. Finally, plays an important role in biofilm formation and resistance to antifungal compounds such as fluconazole, itraconazole, terbinafine and caspofungin. This Candida albicans (strain SC5314 / ATCC MYA-2876) (Yeast) protein is Autophagy-related protein 13.